Consider the following 969-residue polypeptide: Protein translocase subunit SecA (969 aa).

ATP-binding positions include glutamine 99, 117–121 (GEGKT), and aspartate 631.

The protein belongs to the SecA family. In terms of assembly, monomer and homodimer. Part of the essential Sec protein translocation apparatus which comprises SecA, SecYEG and auxiliary proteins SecDF. Other proteins may also be involved.

The protein resides in the cell inner membrane. It localises to the cytoplasm. The enzyme catalyses ATP + H2O + cellular proteinSide 1 = ADP + phosphate + cellular proteinSide 2.. Part of the Sec protein translocase complex. Interacts with the SecYEG preprotein conducting channel. Has a central role in coupling the hydrolysis of ATP to the transfer of proteins into and across the cell membrane, serving as an ATP-driven molecular motor driving the stepwise translocation of polypeptide chains across the membrane. The protein is Protein translocase subunit SecA of Chlamydia trachomatis serovar L2 (strain ATCC VR-902B / DSM 19102 / 434/Bu).